Here is a 178-residue protein sequence, read N- to C-terminus: FMN reductase (NADH) RutF (178 aa).

Belongs to the non-flavoprotein flavin reductase family. RutF subfamily.

It catalyses the reaction FMNH2 + NAD(+) = FMN + NADH + 2 H(+). Catalyzes the reduction of FMN to FMNH2 which is used to reduce pyrimidine by RutA via the Rut pathway. The chain is FMN reductase (NADH) RutF from Pseudomonas syringae pv. syringae (strain B728a).